A 70-amino-acid polypeptide reads, in one-letter code: Small ribosomal subunit protein bS21 (70 aa).

It belongs to the bacterial ribosomal protein bS21 family.

The polypeptide is Small ribosomal subunit protein bS21 (Cupriavidus pinatubonensis (strain JMP 134 / LMG 1197) (Cupriavidus necator (strain JMP 134))).